The primary structure comprises 1350 residues: Nicotinate hydroxylase hnxS (1350 aa).

Cysteine 49, cysteine 54, cysteine 89, cysteine 92, cysteine 133, and cysteine 135 together coordinate [2Fe-2S] cluster. Positions 164–193 (LVGTEEETESDMGAHSGSGDTGSRSSGSCG) are disordered. The span at 180-192 (GSGDTGSRSSGSC) shows a compositional bias: low complexity. The FAD-binding PCMH-type domain occupies 256-445 (YGDAEQAWVK…TKIAVPMPSK (190 aa)). FAD contacts are provided by residues 284–291 (LVTGASEV), 379–383 (CLAGN), aspartate 392, and lysine 455. The Mo-molybdopterin site is built by glutamine 793 and phenylalanine 824. Residues glutamate 828 and arginine 906 each coordinate substrate. Residues arginine 938 and alanine 1107 each coordinate Mo-molybdopterin. The active-site Proton acceptor is the glutamate 1281.

It belongs to the xanthine dehydrogenase family. The cofactor is [2Fe-2S] cluster. It depends on FAD as a cofactor. Mo-molybdopterin serves as cofactor.

Its activity is regulated as follows. Allopurinol inhibits catalytic activity in a linear fashion. In terms of biological role, nicotinate hydroxylase, part of the hnx cluster involved in the purine degradation. The nicotinate hydroxylase hnxS accepts nicotinate as a substrate and catalyzes the first step of nicotinate catabolism. HnxS also accepts hypoxanthine, but not xanthine, as a substrate. The major facilitator-type transporters hxnP and hxnZ are probably involved in the uptake of nicotinate-derived metabolites, and the oxidoreductases hxnT and hxnY in the further metabolism of 6-OH nicotinic acid. This chain is Nicotinate hydroxylase hnxS, found in Emericella nidulans (strain FGSC A4 / ATCC 38163 / CBS 112.46 / NRRL 194 / M139) (Aspergillus nidulans).